We begin with the raw amino-acid sequence, 898 residues long: MEGIHKLIFLALIWIFLITNIVDAQDQQGFISLDCGMPRNESSYTDESTGLNFSSDADFISSGKSGTIKTEDSDSGVKYIKPYKQLRYFPEGARNCYNLTVMQGTHYLIRAVFVYGNYDLKQRPKFDLYLGPNFWTTINLQDPSGGFYYRIWLQDGTVEEVIHMPKSNNLDICLVKTGTTTPFISSLELRPLRDDTYTTTTGSLKLISRWYFRKPFPTLESIIRHPDDVHDRLWDVYHADEEWTDINTTTPVNTTVNAFDLPQAIISKASIPQVASDTWSTTWSIQNPDDDVHVYLHFAEIQALKPSDTREFSILWNKNTIIRDYYSPLEFMADTVPIRTSSKCGDDGFCSLDLTRTKSSTLPPYCNAMEVFGLLQLLQTETDENDVTTLKNIQATYRIQKTNWQGDPCVPIQFIWTGLNCSNMFPSIPPRITSIDFSNFGLNGTITSDIQYLNQLQKLDLSNNNLTGKVPEFLAKMKLLTFINLSGNNLSGSIPQSLLNMEKNGLITLLYNGNNLCLDPSCESETGPGNNKKKLLVPILASAASVGIIIAVLLLVNILLLRKKKPSKASRSSMVANKRSYTYEEVAVITNNFERPLGEGGFGVVYHGNVNDNEQVAVKVLSESSAQGYKQFKAEVDLLLRVHHINLVTLVGYCDEGQHLVLIYEYMSNGNLKQHLSGENSRSPLSWENRLRIAAETAQGLEYLHIGCKPPMIHRDIKSMNILLDNNFQAKLGDFGLSRSFPVGSETHVSTNVAGSPGYLDPEYYRTNWLTEKSDVFSFGVVLLEIITSQPVIDQTREKSHIGEWVGFKLTNGDIKNIVDPSMNGDYDSSSLWKALELAMSCVSPSSSGRPNMSQVANELQECLLTENSRKGGRHDVDSKSSLEQSTSFGPEHIPDAR.

Residues 1–24 form the signal peptide; it reads MEGIHKLIFLALIWIFLITNIVDA. The Extracellular portion of the chain corresponds to 25–535; it reads QDQQGFISLD…TGPGNNKKKL (511 aa). Asn40, Asn52, Asn98, Asn247, Asn253, Asn420, Asn443, Asn465, Asn484, and Asn489 each carry an N-linked (GlcNAc...) asparagine glycan. LRR repeat units lie at residues 455–477, 479–501, and 505–526; these read QLQKLDLSNNNLTGKVPEFLAKM, LLTFINLSGNNLSGSIPQSLLNM, and GLITLLYNGNNLCLDPSCESET. A helical membrane pass occupies residues 536–556; that stretch reads LVPILASAASVGIIIAVLLLV. The Cytoplasmic portion of the chain corresponds to 557-898; it reads NILLLRKKKP…FGPEHIPDAR (342 aa). Thr582 bears the Phosphothreonine mark. One can recognise a Protein kinase domain in the interval 591–864; the sequence is NNFERPLGEG…QVANELQECL (274 aa). Residues 597-605 and Lys619 each bind ATP; that span reads LGEGGFGVV. Tyr664 is subject to Phosphotyrosine. Asp716 (proton acceptor) is an active-site residue. Residue Ser750 is modified to Phosphoserine. Residue Thr751 is modified to Phosphothreonine. Phosphotyrosine is present on Tyr764. The disordered stretch occupies residues 864-898; sequence LLTENSRKGGRHDVDSKSSLEQSTSFGPEHIPDAR. Positions 868–881 are enriched in basic and acidic residues; sequence NSRKGGRHDVDSKS.

The protein belongs to the protein kinase superfamily. Ser/Thr protein kinase family.

The protein resides in the membrane. The catalysed reaction is L-seryl-[protein] + ATP = O-phospho-L-seryl-[protein] + ADP + H(+). The enzyme catalyses L-threonyl-[protein] + ATP = O-phospho-L-threonyl-[protein] + ADP + H(+). This is Probable LRR receptor-like serine/threonine-protein kinase At4g20450 from Arabidopsis thaliana (Mouse-ear cress).